The sequence spans 200 residues: Systemin (200 aa).

Residues 1–33 form a disordered region; that stretch reads MGTPSYDIKNKGDDMQEEPKVKLHHEKGGDEKE. Propeptides lie at residues 1–178 and 197–200; these read MGTP…REDL and NNKL. The 1; truncated repeat unit spans residues 3-8; sequence TPSYDI. Residues 8 to 33 show a composition bias toward basic and acidic residues; the sequence is IKNKGDDMQEEPKVKLHHEKGGDEKE. A run of 4 repeats spans residues 37-45, 80-88, 117-125, and 145-153. Disordered regions lie at residues 106–159 and 178–200; these read EEEE…MEGE and LAVQ…NNKL. Composition is skewed to basic and acidic residues over residues 111-140 and 146-158; these read EKEK…KVEH and KETP…KMEG.

As to expression, all organs except the roots. Transported out of wounds to distal tissues.

It localises to the cytoplasm. Activates a lipid-based signal transduction pathway in which linolenic acid is converted to jasmonic acid, a potent activator of defense gene transcription, including proteinase inhibitor. This is Systemin from Solanum lycopersicum (Tomato).